Reading from the N-terminus, the 45-residue chain is Unknown protein from spots 23/28/205 of 2D-PAGE of thylakoid (45 aa).

It is found in the plastid. The protein resides in the chloroplast thylakoid. The protein is Unknown protein from spots 23/28/205 of 2D-PAGE of thylakoid of Pisum sativum (Garden pea).